A 300-amino-acid polypeptide reads, in one-letter code: Ribosomal protein L11 methyltransferase (300 aa).

S-adenosyl-L-methionine contacts are provided by Thr152, Gly173, Asp195, and Asn234.

Belongs to the methyltransferase superfamily. PrmA family.

The protein localises to the cytoplasm. It carries out the reaction L-lysyl-[protein] + 3 S-adenosyl-L-methionine = N(6),N(6),N(6)-trimethyl-L-lysyl-[protein] + 3 S-adenosyl-L-homocysteine + 3 H(+). In terms of biological role, methylates ribosomal protein L11. The polypeptide is Ribosomal protein L11 methyltransferase (Cupriavidus necator (strain ATCC 17699 / DSM 428 / KCTC 22496 / NCIMB 10442 / H16 / Stanier 337) (Ralstonia eutropha)).